We begin with the raw amino-acid sequence, 537 residues long: Methionine--tRNA ligase (537 aa).

Residues 11-21 carry the 'HIGH' region motif; it reads AYPNAAPHIGH. The 'KMSKS' region signature appears at 301-305; it reads KMSKS. K304 is an ATP binding site. The disordered stretch occupies residues 503–537; it reads PPPTGVFPRYQPSEIEGADPVKSSSKRREHNKRRE. Residues 526 to 537 are compositionally biased toward basic residues; it reads SSKRREHNKRRE.

This sequence belongs to the class-I aminoacyl-tRNA synthetase family. MetG type 2B subfamily. As to quaternary structure, monomer.

The protein resides in the cytoplasm. It carries out the reaction tRNA(Met) + L-methionine + ATP = L-methionyl-tRNA(Met) + AMP + diphosphate. Functionally, is required not only for elongation of protein synthesis but also for the initiation of all mRNA translation through initiator tRNA(fMet) aminoacylation. This chain is Methionine--tRNA ligase, found in Mycobacterium leprae (strain TN).